Here is a 429-residue protein sequence, read N- to C-terminus: Histidine--tRNA ligase (429 aa).

Belongs to the class-II aminoacyl-tRNA synthetase family. In terms of assembly, homodimer.

Its subcellular location is the cytoplasm. The enzyme catalyses tRNA(His) + L-histidine + ATP = L-histidyl-tRNA(His) + AMP + diphosphate + H(+). This is Histidine--tRNA ligase from Desulfotalea psychrophila (strain LSv54 / DSM 12343).